Here is an 807-residue protein sequence, read N- to C-terminus: Tyrosine-protein kinase receptor torso (807 aa).

The first 28 residues, 1–28, serve as a signal peptide directing secretion; it reads MYSEGKLLKVFLIFAGFIIFSLCGEVVS. Topologically, residues 29–370 are extracellular; that stretch reads QRYPPAPGLL…RAFTPGMLRW (342 aa). 4 disulfide bridges follow: Cys46-Cys61, Cys81-Cys203, Cys210-Cys239, and Cys259-Cys265. 4 N-linked (GlcNAc...) asparagine glycosylation sites follow: Asn54, Asn171, Asn183, and Asn195. N-linked (GlcNAc...) asparagine glycosylation is found at Asn307, Asn323, and Asn344. The chain crosses the membrane as a helical span at residues 371-391; that stretch reads VWAGATAGAGCAAGGLLAATL. The Cytoplasmic segment spans residues 392–807; the sequence is LCCGHRRATS…SPPVIQTKTA (416 aa). Residues 439-738 form the Protein kinase domain; that stretch reads VLLHEVIGEG…PTFPELHQKL (300 aa). ATP contacts are provided by residues 445–453 and Lys468; that span reads IGEGAFGVV. The active-site Proton acceptor is Asp607.

This sequence belongs to the protein kinase superfamily. Tyr protein kinase family. In terms of assembly, homodimer; disulfide-linked. Requires Mg(2+) as cofactor. In terms of processing, may be auto-phosphorylated on tyrosine residues. Post-translationally, at least one of the 3 cysteine residues Cys-381, Cys-393 or Cys-394 is involved in the formation of interchain disulfide bonds. The disulfide bond sites in the extracellular region are not involved in homodimer formation.

It localises to the cell membrane. The enzyme catalyses L-tyrosyl-[protein] + ATP = O-phospho-L-tyrosyl-[protein] + ADP + H(+). Its function is as follows. Probable receptor tyrosine kinase. During postembryonic development, involved in the initiation of metamorphosis probably by inducing the production of ecdysone in response to prothoracicotropic hormone (PTTH). Binding to PTTH stimulates activation of canonical MAPK signaling leading to ERK phosphorylation. The sequence is that of Tyrosine-protein kinase receptor torso from Bombyx mori (Silk moth).